The following is a 224-amino-acid chain: Peroxiredoxin-6 (224 aa).

Positions 4 to 168 (LLLGDEAPNF…ILRVVDSLQL (165 aa)) constitute a Thioredoxin domain. The interval 30 to 39 (DSWGILFSHP) is required and sufficient for targeting to lysosomes and lamellar bodies. The active-site Cysteine sulfenic acid (-SOH) intermediate; for peroxidase activity is the Cys-46. At Tyr-88 the chain carries Phosphotyrosine. The active-site For phospholipase activity is Asp-139. Position 176 is a phosphothreonine; by MAPK (Thr-176).

The protein belongs to the peroxiredoxin family. Prx6 subfamily. In terms of assembly, homodimer. Interacts with GSTP1; mediates PRDX6 glutathionylation and regeneration. In terms of processing, irreversibly inactivated by overoxidation of Cys-46 to sulfinic acid (Cys-SO(2)H) and sulfonic acid (Cys-SO(3)H) forms upon oxidative stress. Phosphorylation at Thr-176 by MAP kinases increases the phospholipase activity of the enzyme. The phosphorylated form exhibits a greater lysophosphatidylcholine acyltransferase activity compared to the non-phosphorylated form.

Its subcellular location is the cytoplasm. The protein resides in the lysosome. The enzyme catalyses a hydroperoxide + 2 glutathione = an alcohol + glutathione disulfide + H2O. The catalysed reaction is a 1,2-diacyl-sn-glycero-3-phosphocholine + H2O = a 1-acyl-sn-glycero-3-phosphocholine + a fatty acid + H(+). It carries out the reaction a 1-acyl-sn-glycero-3-phosphocholine + an acyl-CoA = a 1,2-diacyl-sn-glycero-3-phosphocholine + CoA. It catalyses the reaction 1-hexadecanoyl-sn-glycero-3-phosphocholine + hexadecanoyl-CoA = 1,2-dihexadecanoyl-sn-glycero-3-phosphocholine + CoA. The enzyme catalyses 1,2-dihexadecanoyl-sn-glycero-3-phosphocholine + H2O = 1-hexadecanoyl-sn-glycero-3-phosphocholine + hexadecanoate + H(+). Thiol-specific peroxidase that catalyzes the reduction of hydrogen peroxide and organic hydroperoxides to water and alcohols, respectively. Can reduce H(2)O(2) and short chain organic, fatty acid, and phospholipid hydroperoxides. Also has phospholipase activity, and can therefore either reduce the oxidized sn-2 fatty acyl group of phospholipids (peroxidase activity) or hydrolyze the sn-2 ester bond of phospholipids (phospholipase activity). These activities are dependent on binding to phospholipids at acidic pH and to oxidized phospholipds at cytosolic pH. Plays a role in cell protection against oxidative stress by detoxifying peroxides and in phospholipid homeostasis. Exhibits acyl-CoA-dependent lysophospholipid acyltransferase which mediates the conversion of lysophosphatidylcholine (1-acyl-sn-glycero-3-phosphocholine or LPC) into phosphatidylcholine (1,2-diacyl-sn-glycero-3-phosphocholine or PC). Shows a clear preference for LPC as the lysophospholipid and for palmitoyl CoA as the fatty acyl substrate. The polypeptide is Peroxiredoxin-6 (PRDX6) (Gallus gallus (Chicken)).